Reading from the N-terminus, the 538-residue chain is Phosphoenolpyruvate carboxykinase (ATP) (538 aa).

Positions 61, 195, and 201 each coordinate substrate. Residues Lys-201, His-220, and 236 to 244 (GLSGTGKTT) contribute to the ATP site. Mn(2+) contacts are provided by Lys-201 and His-220. Asp-257 contributes to the Mn(2+) binding site. ATP contacts are provided by Glu-285, Arg-323, and Thr-449. Residue Arg-323 coordinates substrate.

The protein belongs to the phosphoenolpyruvate carboxykinase (ATP) family. It depends on Mn(2+) as a cofactor.

The protein resides in the cytoplasm. The catalysed reaction is oxaloacetate + ATP = phosphoenolpyruvate + ADP + CO2. It functions in the pathway carbohydrate biosynthesis; gluconeogenesis. Functionally, involved in the gluconeogenesis. Catalyzes the conversion of oxaloacetate (OAA) to phosphoenolpyruvate (PEP) through direct phosphoryl transfer between the nucleoside triphosphate and OAA. In Bradyrhizobium diazoefficiens (strain JCM 10833 / BCRC 13528 / IAM 13628 / NBRC 14792 / USDA 110), this protein is Phosphoenolpyruvate carboxykinase (ATP).